We begin with the raw amino-acid sequence, 401 residues long: Carbamoyl phosphate synthase small chain (401 aa).

The CPSase stretch occupies residues methionine 1–aspartate 203. The L-glutamine site is built by serine 56, glycine 255, and glycine 257. The Glutamine amidotransferase type-1 domain maps to histidine 207–glutamate 395. Residue cysteine 284 is the Nucleophile of the active site. L-glutamine is bound by residues leucine 285, glutamine 288, asparagine 326, glycine 328, and phenylalanine 329. Catalysis depends on residues histidine 368 and glutamate 370.

Belongs to the CarA family. As to quaternary structure, composed of two chains; the small (or glutamine) chain promotes the hydrolysis of glutamine to ammonia, which is used by the large (or ammonia) chain to synthesize carbamoyl phosphate. Tetramer of heterodimers (alpha,beta)4.

The enzyme catalyses hydrogencarbonate + L-glutamine + 2 ATP + H2O = carbamoyl phosphate + L-glutamate + 2 ADP + phosphate + 2 H(+). The catalysed reaction is L-glutamine + H2O = L-glutamate + NH4(+). It functions in the pathway amino-acid biosynthesis; L-arginine biosynthesis; carbamoyl phosphate from bicarbonate: step 1/1. It participates in pyrimidine metabolism; UMP biosynthesis via de novo pathway; (S)-dihydroorotate from bicarbonate: step 1/3. Its function is as follows. Small subunit of the glutamine-dependent carbamoyl phosphate synthetase (CPSase). CPSase catalyzes the formation of carbamoyl phosphate from the ammonia moiety of glutamine, carbonate, and phosphate donated by ATP, constituting the first step of 2 biosynthetic pathways, one leading to arginine and/or urea and the other to pyrimidine nucleotides. The small subunit (glutamine amidotransferase) binds and cleaves glutamine to supply the large subunit with the substrate ammonia. The polypeptide is Carbamoyl phosphate synthase small chain (Agrobacterium fabrum (strain C58 / ATCC 33970) (Agrobacterium tumefaciens (strain C58))).